Consider the following 519-residue polypeptide: Polyamine aminopropyltransferase (519 aa).

7 helical membrane-spanning segments follow: residues 17-37, 53-73, 86-106, 109-129, 158-178, 180-200, and 208-228; these read LLLV…LALV, LIVA…KPFL, LLGL…AVVG, LWML…ELPL, LGAL…LGMM, GAAA…CVLL, and QFIR…TVLV. Positions 200–463 are spermidine synthase; that stretch reads LRHLLPRAQF…FQLCGPEGTE (264 aa). Residues 225–459 enclose the PABS domain; sequence TVLVRSDGIV…GDWGFQLCGP (235 aa). An S-methyl-5'-thioadenosine-binding site is contributed by Q255. D307 is a spermidine binding site. Residues E326 and 358–359 each bind S-methyl-5'-thioadenosine; that span reads DA. D379 (proton acceptor) is an active-site residue.

It belongs to the spermidine/spermine synthase family. In terms of assembly, homodimer or homotetramer.

It is found in the cell membrane. It carries out the reaction S-adenosyl 3-(methylsulfanyl)propylamine + putrescine = S-methyl-5'-thioadenosine + spermidine + H(+). It participates in amine and polyamine biosynthesis; spermidine biosynthesis; spermidine from putrescine: step 1/1. Its function is as follows. Catalyzes the irreversible transfer of a propylamine group from the amino donor S-adenosylmethioninamine (decarboxy-AdoMet) to putrescine (1,4-diaminobutane) to yield spermidine. The polypeptide is Polyamine aminopropyltransferase (Corynebacterium efficiens (strain DSM 44549 / YS-314 / AJ 12310 / JCM 11189 / NBRC 100395)).